The chain runs to 676 residues: UvrABC system protein B (676 aa).

In terms of domain architecture, Helicase ATP-binding spans 26–414; that stretch reads EGLDAGLAHQ…SAGEIADQVV (389 aa). 39–46 contacts ATP; that stretch reads GVTGSGKT. The short motif at 92–115 is the Beta-hairpin element; sequence YYDYYQPEAYVPTTDTFIEKDASV. The Helicase C-terminal domain maps to 432-598; it reads QVDDLLSEIR…ALKRNIKDIM (167 aa). Residues 636-671 enclose the UVR domain; sequence EKEISRLEAAMYQHAQDLEFELAAEKRDEIEKLRAQ.

This sequence belongs to the UvrB family. As to quaternary structure, forms a heterotetramer with UvrA during the search for lesions. Interacts with UvrC in an incision complex.

The protein localises to the cytoplasm. Functionally, the UvrABC repair system catalyzes the recognition and processing of DNA lesions. A damage recognition complex composed of 2 UvrA and 2 UvrB subunits scans DNA for abnormalities. Upon binding of the UvrA(2)B(2) complex to a putative damaged site, the DNA wraps around one UvrB monomer. DNA wrap is dependent on ATP binding by UvrB and probably causes local melting of the DNA helix, facilitating insertion of UvrB beta-hairpin between the DNA strands. Then UvrB probes one DNA strand for the presence of a lesion. If a lesion is found the UvrA subunits dissociate and the UvrB-DNA preincision complex is formed. This complex is subsequently bound by UvrC and the second UvrB is released. If no lesion is found, the DNA wraps around the other UvrB subunit that will check the other stand for damage. In Vibrio parahaemolyticus serotype O3:K6 (strain RIMD 2210633), this protein is UvrABC system protein B.